A 166-amino-acid polypeptide reads, in one-letter code: MSKPLCSTGLRWLWLVVVVLIIDLGSKYLILQNFALGDTVGLFPSLNLHYARNYGAAFSFLADSGGWQRWFFAGIAIGICVILLVMMYRSKATQKLNNIAYALIIGGALGNLFDRLWHGFVVDMIDFYVGDWHFATFNLADSAICIGAALIVLEGFLPKPTAKEQA.

Helical transmembrane passes span 12–32, 70–90, and 102–122; these read WLWL…LILQ, WFFA…MYRS, and ALII…GFVV. Active-site residues include Asp-123 and Asp-141. Residues 137-157 form a helical membrane-spanning segment; the sequence is FNLADSAICIGAALIVLEGFL.

This sequence belongs to the peptidase A8 family.

The protein localises to the cell inner membrane. The enzyme catalyses Release of signal peptides from bacterial membrane prolipoproteins. Hydrolyzes -Xaa-Yaa-Zaa-|-(S,diacylglyceryl)Cys-, in which Xaa is hydrophobic (preferably Leu), and Yaa (Ala or Ser) and Zaa (Gly or Ala) have small, neutral side chains.. It participates in protein modification; lipoprotein biosynthesis (signal peptide cleavage). In terms of biological role, this protein specifically catalyzes the removal of signal peptides from prolipoproteins. The chain is Lipoprotein signal peptidase from Salmonella agona (strain SL483).